Consider the following 120-residue polypeptide: C-C motif chemokine 23 (120 aa).

Residues 1-21 form the signal peptide; it reads MKVSVAALSCLMLVTALGSQA. 3 disulfide bridges follow: Cys54-Cys78, Cys55-Cys94, and Cys65-Cys105.

This sequence belongs to the intercrine beta (chemokine CC) family. The N-terminal is proteolytically cleaved by proteases associated with inflammatory responses. The processed forms, CCL23(19-99), CCL23(22-99), CCL23(27-99) and CCL23(30-99) exhibit increase in CCR1-mediated signaling and chemotaxis assays in vitro. As to expression, high levels in adult lung, liver, skeletal muscle and pancreas. Moderate levels in fetal liver, adult bone marrow and placenta. The short form is the major species and the longer form was detected only in very low abundance. CCL23(19-99), CCL23(22-99), CCL23(27-99), CCL23(30-99) are found in high levels in synovial fluids from rheumatoid patients.

It is found in the secreted. Functionally, shows chemotactic activity for monocytes, resting T-lymphocytes, and neutrophils, but not for activated lymphocytes. Inhibits proliferation of myeloid progenitor cells in colony formation assays. This protein can bind heparin. Binds CCR1. CCL23(19-99), CCL23(22-99), CCL23(27-99), CCL23(30-99) are more potent chemoattractants than CCL23. The chain is C-C motif chemokine 23 (CCL23) from Homo sapiens (Human).